The following is a 701-amino-acid chain: Polyribonucleotide nucleotidyltransferase (701 aa).

The Mg(2+) site is built by Asp-487 and Asp-493. A KH domain is found at 554-613 (PTMIAMKIDTDKIRDVIGKGGATIRAICEETKASIDIEDDGSIKIFGETKEAAEAARQRV). Positions 623-691 (GKIYVGKVER…NRGRIKLSIK (69 aa)) constitute an S1 motif domain.

This sequence belongs to the polyribonucleotide nucleotidyltransferase family. In terms of assembly, component of the RNA degradosome, which is a multiprotein complex involved in RNA processing and mRNA degradation. It depends on Mg(2+) as a cofactor.

The protein localises to the cytoplasm. It catalyses the reaction RNA(n+1) + phosphate = RNA(n) + a ribonucleoside 5'-diphosphate. Functionally, involved in mRNA degradation. Catalyzes the phosphorolysis of single-stranded polyribonucleotides processively in the 3'- to 5'-direction. This chain is Polyribonucleotide nucleotidyltransferase, found in Pseudomonas putida (strain W619).